We begin with the raw amino-acid sequence, 219 residues long: Orotate phosphoribosyltransferase (219 aa).

Lys26 is a 5-phospho-alpha-D-ribose 1-diphosphate binding site. Residue 34–35 (FF) participates in orotate binding. 5-phospho-alpha-D-ribose 1-diphosphate is bound by residues 72 to 73 (YK), Arg98, Lys99, Lys102, His104, and 124 to 132 (DDVITAGTA). Residues Thr128 and Arg156 each coordinate orotate.

The protein belongs to the purine/pyrimidine phosphoribosyltransferase family. PyrE subfamily. As to quaternary structure, homodimer. It depends on Mg(2+) as a cofactor.

The enzyme catalyses orotidine 5'-phosphate + diphosphate = orotate + 5-phospho-alpha-D-ribose 1-diphosphate. The protein operates within pyrimidine metabolism; UMP biosynthesis via de novo pathway; UMP from orotate: step 1/2. Catalyzes the transfer of a ribosyl phosphate group from 5-phosphoribose 1-diphosphate to orotate, leading to the formation of orotidine monophosphate (OMP). The sequence is that of Orotate phosphoribosyltransferase from Xylella fastidiosa (strain Temecula1 / ATCC 700964).